We begin with the raw amino-acid sequence, 97 residues long: Large ribosomal subunit protein bL27 (97 aa).

Positions 1-12 (MLKMNLANLQLF) are excised as a propeptide. A disordered region spans residues 14 to 37 (HKKGGGSTSNGRDSQAKRLGAKAA).

This sequence belongs to the bacterial ribosomal protein bL27 family. Post-translationally, the N-terminus is cleaved by ribosomal processing cysteine protease Prp.

This Streptococcus uberis (strain ATCC BAA-854 / 0140J) protein is Large ribosomal subunit protein bL27.